Consider the following 136-residue polypeptide: Small ribosomal subunit protein eS17A (136 aa).

It belongs to the eukaryotic ribosomal protein eS17 family. As to quaternary structure, component of the small ribosomal subunit (SSU). Mature yeast ribosomes consist of a small (40S) and a large (60S) subunit. The 40S small subunit contains 1 molecule of ribosomal RNA (18S rRNA) and 33 different proteins (encoded by 57 genes). The large 60S subunit contains 3 rRNA molecules (25S, 5.8S and 5S rRNA) and 46 different proteins (encoded by 81 genes).

Its subcellular location is the cytoplasm. In terms of biological role, component of the ribosome, a large ribonucleoprotein complex responsible for the synthesis of proteins in the cell. The small ribosomal subunit (SSU) binds messenger RNAs (mRNAs) and translates the encoded message by selecting cognate aminoacyl-transfer RNA (tRNA) molecules. The large subunit (LSU) contains the ribosomal catalytic site termed the peptidyl transferase center (PTC), which catalyzes the formation of peptide bonds, thereby polymerizing the amino acids delivered by tRNAs into a polypeptide chain. The nascent polypeptides leave the ribosome through a tunnel in the LSU and interact with protein factors that function in enzymatic processing, targeting, and the membrane insertion of nascent chains at the exit of the ribosomal tunnel. This Saccharomyces cerevisiae (strain ATCC 204508 / S288c) (Baker's yeast) protein is Small ribosomal subunit protein eS17A.